We begin with the raw amino-acid sequence, 89 residues long: MSRSSKKGPFVDPKVFFKVQKAAETGSKEPIKTWARSCTIVPEFVNVTFMVHNGRQHIKVLVTEDMVGHKLGEFAPTRTFKGHGGKGKR.

Belongs to the universal ribosomal protein uS19 family.

Protein S19 forms a complex with S13 that binds strongly to the 16S ribosomal RNA. This is Small ribosomal subunit protein uS19 from Rhodopirellula baltica (strain DSM 10527 / NCIMB 13988 / SH1).